Reading from the N-terminus, the 181-residue chain is NAD(P)H-quinone oxidoreductase subunit I, chloroplastic (181 aa).

4Fe-4S ferredoxin-type domains lie at 55-84 and 95-124; these read GRIH…VDWE and KNYS…MTEE. Residues Cys-64, Cys-67, Cys-70, Cys-74, Cys-104, Cys-107, Cys-110, and Cys-114 each coordinate [4Fe-4S] cluster.

The protein belongs to the complex I 23 kDa subunit family. NDH is composed of at least 16 different subunits, 5 of which are encoded in the nucleus. Requires [4Fe-4S] cluster as cofactor.

The protein resides in the plastid. The protein localises to the chloroplast thylakoid membrane. It carries out the reaction a plastoquinone + NADH + (n+1) H(+)(in) = a plastoquinol + NAD(+) + n H(+)(out). The enzyme catalyses a plastoquinone + NADPH + (n+1) H(+)(in) = a plastoquinol + NADP(+) + n H(+)(out). In terms of biological role, NDH shuttles electrons from NAD(P)H:plastoquinone, via FMN and iron-sulfur (Fe-S) centers, to quinones in the photosynthetic chain and possibly in a chloroplast respiratory chain. The immediate electron acceptor for the enzyme in this species is believed to be plastoquinone. Couples the redox reaction to proton translocation, and thus conserves the redox energy in a proton gradient. This chain is NAD(P)H-quinone oxidoreductase subunit I, chloroplastic, found in Angiopteris evecta (Mule's foot fern).